A 3003-amino-acid polypeptide reads, in one-letter code: MAX gene-associated protein (3003 aa).

Residues Lys-4 and Lys-178 each participate in a glycyl lysine isopeptide (Lys-Gly) (interchain with G-Cter in SUMO2) cross-link. A DNA-binding region (T-box) is located at residues 84–260; that stretch reads MWNEFHNRST…YNPFAKGFRD (177 aa). The span at 259–277 shows a compositional bias: basic and acidic residues; it reads RDDGLSSKPQREGKQRNSS. Positions 259–290 are disordered; sequence RDDGLSSKPQREGKQRNSSDQEGNSVSSSPAH. Residues 278–288 show a composition bias toward polar residues; sequence DQEGNSVSSSP. Glycyl lysine isopeptide (Lys-Gly) (interchain with G-Cter in SUMO2) cross-links involve residues Lys-323, Lys-329, Lys-348, Lys-431, Lys-458, Lys-463, and Lys-480. Residue Ser-531 is modified to Phosphoserine. Residues 553 to 647 are disordered; it reads ILDNSSTERI…NIPVGPGSTF (95 aa). Lys-567 is covalently cross-linked (Glycyl lysine isopeptide (Lys-Gly) (interchain with G-Cter in SUMO2)). The segment covering 595–607 has biased composition (polar residues); the sequence is KTVTASHSASPNT. A Phosphoserine modification is found at Ser-604. Glycyl lysine isopeptide (Lys-Gly) (interchain with G-Cter in SUMO2) cross-links involve residues Lys-610, Lys-651, Lys-782, Lys-788, Lys-814, and Lys-823. The segment covering 610–621 has biased composition (basic residues); sequence KRGRPRKLRLSK. At Ser-848 the chain carries Phosphoserine. Positions 871 to 913 are enriched in polar residues; sequence KQSTISPSTSHSVKPQSVTTASRKTKAQNKQTTLSGRTKSSYK. Disordered regions lie at residues 871 to 946 and 967 to 987; these read KQST…TSDN and LRQA…GLSK. Ser-921 bears the Phosphoserine mark. Lys-925 participates in a covalent cross-link: Glycyl lysine isopeptide (Lys-Gly) (interchain with G-Cter in SUMO2). Polar residues predominate over residues 937 to 946; the sequence is KNSLSSTSDN. Over residues 969 to 978 the composition is skewed to low complexity; sequence QAQQQHLQQQ. Residues Lys-987 and Lys-1088 each participate in a glycyl lysine isopeptide (Lys-Gly) (interchain with G-Cter in SUMO2) cross-link. The interval 1111 to 1130 is disordered; sequence LGEEGREGGGVREDEEQLKE. The span at 1113-1122 shows a compositional bias: basic and acidic residues; it reads EEGREGGGVR. Glycyl lysine isopeptide (Lys-Gly) (interchain with G-Cter in SUMO2) cross-links involve residues Lys-1136, Lys-1158, Lys-1194, and Lys-1202. Disordered regions lie at residues 1186-1215, 1246-1277, 1297-1323, and 1376-1424; these read QPDL…NPVI, QRQL…TKEL, SQEK…RSPG, and RGEK…DISP. 2 stretches are compositionally biased toward low complexity: residues 1248–1269 and 1303–1315; these read QLSP…YSSP and KSSC…SSTS. Ser-1423 and Ser-1450 each carry phosphoserine. Residues Lys-1454 and Lys-1495 each participate in a glycyl lysine isopeptide (Lys-Gly) (interchain with G-Cter in SUMO2) cross-link. Disordered stretches follow at residues 1476 to 1508, 1722 to 1746, 1856 to 1885, 1920 to 1954, 1964 to 1983, and 1988 to 2038; these read AKVA…RSGK, PPVS…SNNV, ISPP…PVGT, IKKE…KALD, SGII…GGDL, and TLRE…AGSK. Composition is skewed to polar residues over residues 1488 to 1507, 1735 to 1746, and 1859 to 1880; these read LPST…NRSG, PVTTPQISSNNV, and PETQ…STGG. Glycyl lysine isopeptide (Lys-Gly) (interchain with G-Cter in SUMO2) cross-links involve residues Lys-1937 and Lys-1944. Residues 1964–1976 show a composition bias toward polar residues; that stretch reads SGIIASENTSNNS. Residues Lys-2060 and Lys-2084 each participate in a glycyl lysine isopeptide (Lys-Gly) (interchain with G-Cter in SUMO2) cross-link. The segment at 2087 to 2110 is disordered; that stretch reads LSGNQVKEQQSNSQAEAKKDCEDS. Polar residues predominate over residues 2088 to 2101; the sequence is SGNQVKEQQSNSQA. Glycyl lysine isopeptide (Lys-Gly) (interchain with G-Cter in SUMO2) cross-links involve residues Lys-2104, Lys-2152, and Lys-2179. Arg-2206 bears the Omega-N-methylarginine mark. The segment at 2207–2255 is disordered; sequence GSRHFQGHLLLPREQMKPKQQTKDGRSSAADFTVLDLEDEDEEDEKTDD. A compositionally biased stretch (basic and acidic residues) spans 2220-2232; it reads EQMKPKQQTKDGR. A Glycyl lysine isopeptide (Lys-Gly) (interchain with G-Cter in SUMO2) cross-link involves residue Lys-2225. The segment covering 2242–2255 has biased composition (acidic residues); it reads DLEDEDEEDEKTDD. Residues Lys-2317, Lys-2352, Lys-2396, and Lys-2471 each participate in a glycyl lysine isopeptide (Lys-Gly) (interchain with G-Cter in SUMO2) cross-link. In terms of domain architecture, bHLH spans 2362–2413; it reads YYRRTHTANERRRRGEMRDLFEKLKITLGLLHSSKVSKSLILNRAFSEIQGL. Ser-2480 carries the phosphoserine modification. The segment at 2515-2534 is disordered; the sequence is KRDQATENASPSDTPHSSAN. Positions 2520-2534 are enriched in polar residues; the sequence is TENASPSDTPHSSAN. Residues Lys-2568 and Lys-2618 each participate in a glycyl lysine isopeptide (Lys-Gly) (interchain with G-Cter in SUMO2) cross-link. A compositionally biased stretch (basic and acidic residues) spans 2629 to 2651; sequence SEASSLKDTERISSRGNHRDSRK. The disordered stretch occupies residues 2629–2654; the sequence is SEASSLKDTERISSRGNHRDSRKALG. A Glycyl lysine isopeptide (Lys-Gly) (interchain with G-Cter in SUMO2) cross-link involves residue Lys-2724. Phosphoserine occurs at positions 2849 and 2860. The interval 2877–2917 is disordered; it reads LVSHRKSSDGGQSTSGLPAEPESVSSPPILHMKTGPENSNT. Lys-2979 participates in a covalent cross-link: Glycyl lysine isopeptide (Lys-Gly) (interchain with G-Cter in SUMO2).

Component of some MLL1/MLL complex, at least composed of the core components KMT2A/MLL1, ASH2L, HCFC1/HCF1, WDR5 and RBBP5, as well as the facultative components BACC1, CHD8, E2F6, HSP70, INO80C, KANSL1, LAS1L, MAX, MCRS1, MGA, MYST1/MOF, PELP1, PHF20, PRP31, RING2, RUVB1/TIP49A, RUVB2/TIP49B, SENP3, TAF1, TAF4, TAF6, TAF7, TAF9 and TEX10. Interacts with ZMYND11. Interacts with MAX. Requires heterodimerization with MAX for E-box binding. Highly expressed in germ cells and granulosa cells.

It localises to the nucleus. In terms of biological role, functions as a dual-specificity transcription factor, regulating the expression of both MAX-network and T-box family target genes. Functions as a repressor or an activator. Binds to 5'-AATTTCACACCTAGGTGTGAAATT-3' core sequence and seems to regulate MYC-MAX target genes. Suppresses transcriptional activation by MYC and inhibits MYC-dependent cell transformation. Function activated by heterodimerization with MAX. This heterodimerization serves the dual function of both generating an E-box-binding heterodimer and simultaneously blocking interaction of a corepressor. The polypeptide is MAX gene-associated protein (Mus musculus (Mouse)).